The primary structure comprises 264 residues: S-adenosylmethionine decarboxylase proenzyme (264 aa).

Ser-113 serves as the catalytic Schiff-base intermediate with substrate; via pyruvic acid. Ser-113 is modified (pyruvic acid (Ser); by autocatalysis). Catalysis depends on His-118, which acts as the Proton acceptor; for processing activity. Residue Cys-141 is the Proton donor; for catalytic activity of the active site.

The protein belongs to the prokaryotic AdoMetDC family. Type 2 subfamily. As to quaternary structure, heterooctamer of four alpha and four beta chains arranged as a tetramer of alpha/beta heterodimers. It depends on pyruvate as a cofactor. In terms of processing, is synthesized initially as an inactive proenzyme. Formation of the active enzyme involves a self-maturation process in which the active site pyruvoyl group is generated from an internal serine residue via an autocatalytic post-translational modification. Two non-identical subunits are generated from the proenzyme in this reaction, and the pyruvate is formed at the N-terminus of the alpha chain, which is derived from the carboxyl end of the proenzyme. The post-translation cleavage follows an unusual pathway, termed non-hydrolytic serinolysis, in which the side chain hydroxyl group of the serine supplies its oxygen atom to form the C-terminus of the beta chain, while the remainder of the serine residue undergoes an oxidative deamination to produce ammonia and the pyruvoyl group blocking the N-terminus of the alpha chain.

The enzyme catalyses S-adenosyl-L-methionine + H(+) = S-adenosyl 3-(methylsulfanyl)propylamine + CO2. It participates in amine and polyamine biosynthesis; S-adenosylmethioninamine biosynthesis; S-adenosylmethioninamine from S-adenosyl-L-methionine: step 1/1. Catalyzes the decarboxylation of S-adenosylmethionine to S-adenosylmethioninamine (dcAdoMet), the propylamine donor required for the synthesis of the polyamines spermine and spermidine from the diamine putrescine. The polypeptide is S-adenosylmethionine decarboxylase proenzyme (Stenotrophomonas maltophilia (strain R551-3)).